Here is an 814-residue protein sequence, read N- to C-terminus: Origin of replication complex subunit 1 (814 aa).

Residues 1–15 (MDLSATPSRSKSGLR) are compositionally biased toward polar residues. Positions 1-127 (MDLSATPSRS…PKKPKKRAYY (127 aa)) are disordered. 2 stretches are compositionally biased toward low complexity: residues 51 to 62 (APMSPVTPSSVR) and 69 to 80 (ETPTKVTSETPV). The Nuclear localization signal signature appears at 105 to 112 (PKRQRQRQ). Residues 108–127 (QRQRQRQRQQPKKPKKRAYY) show a composition bias toward basic residues. A histone H3 binding region spans residues 157–181 (DPEAEECRVCFRAGAAVMVECDVCL). The PHD-type zinc finger occupies 160-209 (AEECRVCFRAGAAVMVECDVCLGGFHLRCVRPPLRRVPEGDWACPYCEAE). Residues cysteine 163, cysteine 166, cysteine 177, cysteine 180, histidine 185, and cysteine 188 each coordinate Zn(2+). Residues 197–201 (PEGDW) form a histone H3 binding region. 2 residues coordinate Zn(2+): cysteine 203 and cysteine 206. The 118-residue stretch at 218–335 (PKPPEGKRIV…IHWHNFKRLA (118 aa)) folds into the BAH domain. Residues 310 to 315 (ASDQGD) are histone H3 binding. Composition is skewed to acidic residues over residues 339-349 (DEPETKEDPGD) and 360-373 (SDSD…EEEE). A disordered region spans residues 339–384 (DEPETKEDPGDEPYNAGNDYVSDSDEDSEYDEEEEPTKCSSARTHQ). Residues 433–804 (PKSLPCRDKE…DDVTFALKES (372 aa)) are necessary and sufficient for ORC complex assembly. ATP-binding positions include 468 to 475 (GVPGTGKT) and 468 to 476 (GVPGTGKTM). The Mg(2+) site is built by aspartate 558 and glutamate 559. The ATP site is built by glutamate 559, asparagine 592, and arginine 657.

It belongs to the ORC1 family. Component of the origin recognition complex (ORC) composed of at least ORC1, ORC2, ORC3, ORC4, ORC5 and ORC6. ORC is regulated in a cell-cycle and development dependent manner. It is sequentially assembled at the exit from anaphase of mitosis and disassembled as cells enter S phase. Binds unmodified and methylated histone H3. In terms of tissue distribution, expressed strongly in root tips and shoot apical meristem (SAM), and weakly in young leaves. Not detected in mature leaves.

The protein resides in the nucleus. Functionally, essential protein. Component of the origin recognition complex (ORC) that binds origins of replication. It has a role in both chromosomal replication and mating type transcriptional silencing. Binds to the ARS consensus sequence (ACS) of origins of replication. H3K4me3 effector that positively regulates the transcription of a subset of genes. Required for cell proliferation. This Oryza sativa subsp. japonica (Rice) protein is Origin of replication complex subunit 1.